A 156-amino-acid chain; its full sequence is Small ribosomal subunit protein uS7 (156 aa).

Belongs to the universal ribosomal protein uS7 family. As to quaternary structure, part of the 30S ribosomal subunit. Contacts proteins S9 and S11.

One of the primary rRNA binding proteins, it binds directly to 16S rRNA where it nucleates assembly of the head domain of the 30S subunit. Is located at the subunit interface close to the decoding center, probably blocks exit of the E-site tRNA. In Bartonella quintana (strain Toulouse) (Rochalimaea quintana), this protein is Small ribosomal subunit protein uS7.